A 499-amino-acid polypeptide reads, in one-letter code: Maturase K (499 aa).

It belongs to the intron maturase 2 family. MatK subfamily.

The protein resides in the plastid. Its subcellular location is the chloroplast. Its function is as follows. Usually encoded in the trnK tRNA gene intron. Probably assists in splicing its own and other chloroplast group II introns. This is Maturase K from Gymnocladus chinensis (Soap tree).